The chain runs to 2839 residues: Neurofibromin (2839 aa).

Ala-2 is subject to N-acetylalanine. Residues Ser-864 and Ser-876 each carry the phosphoserine modification. The 232-residue stretch at 1251–1482 folds into the Ras-GAP domain; sequence HLLYQLLWNM…DAARRFFLDI (232 aa). The CRAL-TRIO domain maps to 1580–1738; that stretch reads EKEEFKALKT…ATLALEEDLK (159 aa). The interval 1580-1837 is lipid binding; the sequence is EKEEFKALKT…RTRWELSQPD (258 aa). Phosphoserine is present on residues Ser-2188 and Ser-2467. Residue Thr-2514 is modified to Phosphothreonine. Residues Ser-2515, Ser-2521, Ser-2523, and Ser-2543 each carry the phosphoserine modification. A Bipartite nuclear localization signal motif is present at residues 2555–2571; the sequence is KRQEMESGITTPPKMRR. The residue at position 2565 (Thr-2565) is a Phosphothreonine. Ser-2597, Ser-2802, and Ser-2817 each carry phosphoserine. The interval 2787-2839 is disordered; that stretch reads TSQHSPGIDKENVELSPTTGHCNSGRTRHGSASQVQKQRSAGSFKRNSIKKIV. The span at 2801-2827 shows a compositional bias: polar residues; it reads LSPTTGHCNSGRTRHGSASQVQKQRSA.

As to quaternary structure, interacts with HTR6. Interacts with SPRED2. Post-translationally, ubiquitinated by RNF7/RBX2, leading to its degradation. Detected in brain, peripheral nerve, lung, colon and muscle.

The protein localises to the nucleus. Its subcellular location is the nucleolus. It localises to the cell membrane. In terms of biological role, stimulates the GTPase activity of Ras. NF1 shows greater affinity for Ras GAP, but lower specific activity. May be a regulator of Ras activity. This chain is Neurofibromin (NF1), found in Homo sapiens (Human).